Here is a 372-residue protein sequence, read N- to C-terminus: tRNA-specific 2-thiouridylase MnmA (372 aa).

Residues 16 to 23 and methionine 42 each bind ATP; that span reads GMSGGVDS. The interaction with target base in tRNA stretch occupies residues 102–104; that stretch reads NPD. The active-site Nucleophile is cysteine 107. Cysteine 107 and cysteine 205 form a disulfide bridge. Glycine 132 lines the ATP pocket. The tract at residues 155–157 is interaction with tRNA; sequence KDQ. Catalysis depends on cysteine 205, which acts as the Cysteine persulfide intermediate. The tract at residues 317–318 is interaction with tRNA; it reads RY.

Belongs to the MnmA/TRMU family.

The protein resides in the cytoplasm. The catalysed reaction is S-sulfanyl-L-cysteinyl-[protein] + uridine(34) in tRNA + AH2 + ATP = 2-thiouridine(34) in tRNA + L-cysteinyl-[protein] + A + AMP + diphosphate + H(+). Catalyzes the 2-thiolation of uridine at the wobble position (U34) of tRNA, leading to the formation of s(2)U34. In Shewanella sp. (strain W3-18-1), this protein is tRNA-specific 2-thiouridylase MnmA.